Consider the following 93-residue polypeptide: Small ribosomal subunit protein uS19 (93 aa).

It belongs to the universal ribosomal protein uS19 family.

Its function is as follows. Protein S19 forms a complex with S13 that binds strongly to the 16S ribosomal RNA. The chain is Small ribosomal subunit protein uS19 (rpsS) from Thermus thermophilus (strain ATCC BAA-163 / DSM 7039 / HB27).